The primary structure comprises 180 residues: UPF0303 protein PSEEN3311 (180 aa).

The protein belongs to the UPF0303 family.

This chain is UPF0303 protein PSEEN3311, found in Pseudomonas entomophila (strain L48).